The primary structure comprises 121 residues: Non-structural protein 8 (121 aa).

An N-terminal signal peptide occupies residues 1-15 (MKLLIVFGLLASVYC). The region spanning 19–121 (ECSIQECCEN…HDVRVVLDFI (103 aa)) is the SARS ORF8 Ig-like domain. 3 disulfides stabilise this stretch: Cys-25–Cys-90, Cys-37–Cys-102, and Cys-61–Cys-83.

The protein is Non-structural protein 8 of Bat coronavirus HKU3 (BtCoV).